Reading from the N-terminus, the 489-residue chain is Topoisomerase I damage affected protein 11 (489 aa).

5 disordered regions span residues 1-199 (MDQK…QSMA), 263-321 (INVS…DDNK), 344-370 (ERTL…KSVS), 391-413 (EDGH…HGQV), and 439-477 (DDNS…DSTL). Residues 19–35 (DTSSRYTTGSISPQFAS) are compositionally biased toward polar residues. Positions 73–89 (EESHNHPLKEDKSESRQ) are enriched in basic and acidic residues. Polar residues-rich tracts occupy residues 90-103 (RQVS…SSKG), 128-147 (PQSQ…NLHP), and 156-167 (NATTQTPSSMSM). The segment covering 182-197 (SSKRNSMHSRTSSSQS) has biased composition (low complexity). Positions 210–266 (VNALLQSLANKELELLECKRKIDDLKKQLHMEENIYQNKANELQELKNKVSKNINVS) form a coiled coil. A compositionally biased stretch (polar residues) spans 263–281 (INVSGSNQPVFNKTSTTGR). Residues 396-411 (TQQSNSNVNRPKNTHG) show a composition bias toward polar residues. The span at 447 to 460 (KQRSGRTAVRKTKS) shows a compositional bias: basic residues. Residues 468–477 (DDSDDGDSTL) are compositionally biased toward acidic residues.

This sequence belongs to the TDA11 family.

The protein resides in the cytoplasm. This chain is Topoisomerase I damage affected protein 11 (TDA11), found in Candida glabrata (strain ATCC 2001 / BCRC 20586 / JCM 3761 / NBRC 0622 / NRRL Y-65 / CBS 138) (Yeast).